A 145-amino-acid polypeptide reads, in one-letter code: Ribosomal RNA large subunit methyltransferase H (145 aa).

S-adenosyl-L-methionine is bound by residues G94 and 113-118 (LSPLTF).

It belongs to the RNA methyltransferase RlmH family. As to quaternary structure, homodimer.

Its subcellular location is the cytoplasm. It carries out the reaction pseudouridine(1915) in 23S rRNA + S-adenosyl-L-methionine = N(3)-methylpseudouridine(1915) in 23S rRNA + S-adenosyl-L-homocysteine + H(+). In terms of biological role, specifically methylates the pseudouridine at position 1915 (m3Psi1915) in 23S rRNA. This is Ribosomal RNA large subunit methyltransferase H from Sorangium cellulosum (strain So ce56) (Polyangium cellulosum (strain So ce56)).